The primary structure comprises 520 residues: MLHYLKKMKKKIFTYFIAIFSGIIGVLAFSPFDYWGCAYLSLLGLIFVAKTAEKKTALWSAFLWGLAFFTFGINWVHVSIHQFGGASVVVSYVLVLVLAAYLALYPMLFAYLIQRFQISSLAMFPVIWTFTEFLRGWLFTGFPWLQFGYSQIDSPFAHLAPMFGVTGVTFFVMWVSAVIFNLLSVLLIKPRKWNVVIANLLLLTLVGGLSAYSSKAEYVRKIEDRDLLVTLAQGNIEQNLKWEPEYLYQTLDIYHKLISQHLGKTDVIILPESALPVLENHIQPFFQGLQAHAQQAGTEIVMGTIYQDKTANKLLNSIITLGNTDFPYSLETTNRYSKHHLVPFGEYVPLETLLRPLGSVFNLPMSAFQSGDEIQSPLVVKNRQLSAAICYEIILGEQLRKNVKQDTDFILTVSNDAWFGDSIGPWQHLQMARMRALEFGKPVIRATNTGISVFIDEQGKIVAQAPQFIETTLTHKVAATEGQTPYAVFGNTAIYGLSLLLLLMRGFGALIRRRLFMPRL.

7 helical membrane passes run 12-32 (IFTY…FSPF), 33-53 (DYWG…KTAE), 58-78 (LWSA…WVHV), 93-113 (VLVL…AYLI), 122-142 (AMFP…FTGF), 168-188 (VTFF…VLLI), and 193-213 (WNVV…SAYS). Residues 232–479 (AQGNIEQNLK…ETTLTHKVAA (248 aa)) form the CN hydrolase domain. Catalysis depends on glutamate 272, which acts as the Proton acceptor. The active site involves lysine 338. Catalysis depends on cysteine 390, which acts as the Nucleophile. The helical transmembrane segment at 484-504 (TPYAVFGNTAIYGLSLLLLLM) threads the bilayer.

Belongs to the CN hydrolase family. Apolipoprotein N-acyltransferase subfamily.

The protein resides in the cell inner membrane. The enzyme catalyses N-terminal S-1,2-diacyl-sn-glyceryl-L-cysteinyl-[lipoprotein] + a glycerophospholipid = N-acyl-S-1,2-diacyl-sn-glyceryl-L-cysteinyl-[lipoprotein] + a 2-acyl-sn-glycero-3-phospholipid + H(+). The protein operates within protein modification; lipoprotein biosynthesis (N-acyl transfer). Functionally, catalyzes the phospholipid dependent N-acylation of the N-terminal cysteine of apolipoprotein, the last step in lipoprotein maturation. The protein is Apolipoprotein N-acyltransferase of Pasteurella multocida (strain Pm70).